The following is a 591-amino-acid chain: MHMYRSHTCADLSAQDVGKTVRLSGWVHRVRDHGGVLFIDLRDHYGITQVLCDPDSPVFEQMEQVRAEWCIRVDGVVKARDASLINPKISTGEIELFVKDLEVLGASEELPLQVFGDQEYPEETRLKYRYLDLRRANMQANMKLRSDVVASLRQQMWKADFREFQTPIITASSPEGARDFLVPSRLHPGRFYALPQAPQQFKQLLMVSGFDKYFQIAPCFRDEDPRADRSPTDFYQLDIEMSFVTQQDVFDVIQPVLTQVFEQFGNGKAVDQEWPQISYKDAALWYGSDKPDLRNPIKMQSVSEHFAGSGFAIFANLLEQEGTEIRAIPAPGGGSRKFCDRMNAFAQKEGLPGMGYIFWRDQGAGMEAAGPLAKNIGPERTEAIRQQLGLGVGDAAFFLGGKPKAFETVAGKARNHIGMELGLTDQNRFAFAWIVDFPIYEKDSETGRIDFEHNPFSMPQGGLEALQGDPLSVVGYQYDLSCNGYELVSGAIRNHKPEIMFKAFEIAGYGEDEVRKRFGGMVNAFQYGAPPHGGCAAGIDRIVMLLAEEANIREVILFPMNQRAEDLMMSAPSEPESEQLMELGLRVIPKD.

E175 contacts L-aspartate. Positions 199–202 are aspartate; sequence QQFK. L-aspartate contacts are provided by R221 and H453. 221–223 serves as a coordination point for ATP; that stretch reads RDE. ATP is bound at residue E486. Position 493 (R493) interacts with L-aspartate. Residue 538-541 coordinates ATP; it reads GIDR.

The protein belongs to the class-II aminoacyl-tRNA synthetase family. Type 1 subfamily. Homodimer.

The protein localises to the cytoplasm. The catalysed reaction is tRNA(Asx) + L-aspartate + ATP = L-aspartyl-tRNA(Asx) + AMP + diphosphate. Aspartyl-tRNA synthetase with relaxed tRNA specificity since it is able to aspartylate not only its cognate tRNA(Asp) but also tRNA(Asn). Reaction proceeds in two steps: L-aspartate is first activated by ATP to form Asp-AMP and then transferred to the acceptor end of tRNA(Asp/Asn). The chain is Aspartate--tRNA(Asp/Asn) ligase from Roseobacter denitrificans (strain ATCC 33942 / OCh 114) (Erythrobacter sp. (strain OCh 114)).